The following is a 556-amino-acid chain: Genetic interactor of prohibitins 3, mitochondrial (556 aa).

A mitochondrion-targeting transit peptide spans 1-21; the sequence is MLNLCHALRGVRQFSCSVIVK. A CP-type G domain is found at 113 to 305; sequence ESTLNDILNY…LFDLPGYSTS (193 aa).

This sequence belongs to the TRAFAC class YlqF/YawG GTPase family. GEP3 subfamily.

It is found in the mitochondrion. In terms of biological role, interacts genetically with prohibitins and thus may be involved in the mitochondrial lipid metabolism. The sequence is that of Genetic interactor of prohibitins 3, mitochondrial (GEP3) from Saccharomyces cerevisiae (strain ATCC 204508 / S288c) (Baker's yeast).